We begin with the raw amino-acid sequence, 462 residues long: Light-independent protochlorophyllide reductase subunit N (462 aa).

Positions 24, 49, and 109 each coordinate [4Fe-4S] cluster.

The protein belongs to the BchN/ChlN family. Protochlorophyllide reductase is composed of three subunits; ChlL, ChlN and ChlB. Forms a heterotetramer of two ChlB and two ChlN subunits. [4Fe-4S] cluster is required as a cofactor.

The protein localises to the plastid. The protein resides in the chloroplast. The enzyme catalyses chlorophyllide a + oxidized 2[4Fe-4S]-[ferredoxin] + 2 ADP + 2 phosphate = protochlorophyllide a + reduced 2[4Fe-4S]-[ferredoxin] + 2 ATP + 2 H2O. It functions in the pathway porphyrin-containing compound metabolism; chlorophyll biosynthesis (light-independent). Functionally, component of the dark-operative protochlorophyllide reductase (DPOR) that uses Mg-ATP and reduced ferredoxin to reduce ring D of protochlorophyllide (Pchlide) to form chlorophyllide a (Chlide). This reaction is light-independent. The NB-protein (ChlN-ChlB) is the catalytic component of the complex. This chain is Light-independent protochlorophyllide reductase subunit N, found in Pleurastrum terricola (Filamentous green alga).